Reading from the N-terminus, the 233-residue chain is Ribonuclease 3 (233 aa).

An RNase III domain is found at 7–136; sequence KQYLLSEFNI…FIGALYLDQG (130 aa). E49 contacts Mg(2+). D53 is a catalytic residue. Mg(2+) contacts are provided by D122 and E125. E125 is an active-site residue. The 71-residue stretch at 162 to 232 folds into the DRBM domain; sequence DFKSRLQEKL…ARAALKLLEE (71 aa).

This sequence belongs to the ribonuclease III family. Homodimer. Mg(2+) is required as a cofactor.

The protein resides in the cytoplasm. The catalysed reaction is Endonucleolytic cleavage to 5'-phosphomonoester.. In terms of biological role, digests double-stranded RNA. Involved in the processing of primary rRNA transcript to yield the immediate precursors to the large and small rRNAs (23S and 16S). Processes some mRNAs, and tRNAs when they are encoded in the rRNA operon. Processes pre-crRNA and tracrRNA of type II CRISPR loci if present in the organism. The sequence is that of Ribonuclease 3 from Leuconostoc citreum (strain KM20).